The primary structure comprises 792 residues: Phenylalanine--tRNA ligase beta subunit (792 aa).

The tRNA-binding domain occupies 39–147 (GESLGQVVVA…DDAPVGQALA (109 aa)). The region spanning 400 to 475 (PQPARILLRR…RIHGYDRVPT (76 aa)) is the B5 domain. Residues D453, D459, E462, and D463 each coordinate Mg(2+). Residues 698 to 791 (SRFPSVRRDL…IEREHRARIR (94 aa)) form the FDX-ACB domain.

This sequence belongs to the phenylalanyl-tRNA synthetase beta subunit family. Type 1 subfamily. As to quaternary structure, tetramer of two alpha and two beta subunits. It depends on Mg(2+) as a cofactor.

The protein localises to the cytoplasm. The catalysed reaction is tRNA(Phe) + L-phenylalanine + ATP = L-phenylalanyl-tRNA(Phe) + AMP + diphosphate + H(+). This is Phenylalanine--tRNA ligase beta subunit from Xanthomonas oryzae pv. oryzae (strain KACC10331 / KXO85).